Reading from the N-terminus, the 205-residue chain is MSDIVWHQHSIDKQSRADQKGQNPILLWFTGLSGSGKSTLAGALERALFDAGFHTYLLDGDNVRHGLCKDLGFSADDRDENLRRVGEVAKLMVDAGLVVLSAFISPTREERERVRALFDQGQFIEVHVSTPIEVCEARDPKGLYSKARAGEIKNFTGISAPYETPTAAELTIDTSKGDLATQVSALLDYLAAIQVIDSEKLKKAV.

31-38 (GLSGSGKS) provides a ligand contact to ATP. Ser105 functions as the Phosphoserine intermediate in the catalytic mechanism.

The protein belongs to the APS kinase family.

The enzyme catalyses adenosine 5'-phosphosulfate + ATP = 3'-phosphoadenylyl sulfate + ADP + H(+). It participates in sulfur metabolism; hydrogen sulfide biosynthesis; sulfite from sulfate: step 2/3. In terms of biological role, catalyzes the synthesis of activated sulfate. The protein is Adenylyl-sulfate kinase of Shewanella pealeana (strain ATCC 700345 / ANG-SQ1).